The sequence spans 584 residues: Putative poly(A) polymerase catalytic subunit (584 aa).

Residues 522-531 (EAEISEKEET) are compositionally biased toward basic and acidic residues. The interval 522–584 (EAEISEKEET…ENSLDSLTSD (63 aa)) is disordered. Residues 546–569 (SPNSSPNSSPNNSLNNSIDISTNN) show a composition bias toward low complexity.

The protein belongs to the poxviridae poly(A) polymerase catalytic subunit family. Highly divergent.

Its subcellular location is the virion. It carries out the reaction RNA(n) + ATP = RNA(n)-3'-adenine ribonucleotide + diphosphate. In terms of biological role, polymerase that creates the 3'-poly(A) tail of mRNA's. In Acanthamoeba polyphaga (Amoeba), this protein is Putative poly(A) polymerase catalytic subunit.